We begin with the raw amino-acid sequence, 228 residues long: Ribonuclease 3 (228 aa).

Positions 7–132 constitute an RNase III domain; sequence LSAFMDRLGH…VIAAVYLDAG (126 aa). A Mg(2+)-binding site is contributed by E45. D49 is a catalytic residue. 2 residues coordinate Mg(2+): D118 and E121. The active site involves E121. Positions 157-226 constitute a DRBM domain; it reads DPKTALQEWA…AKALLERLER (70 aa).

Belongs to the ribonuclease III family. In terms of assembly, homodimer. The cofactor is Mg(2+).

It localises to the cytoplasm. The catalysed reaction is Endonucleolytic cleavage to 5'-phosphomonoester.. Digests double-stranded RNA. Involved in the processing of ribosomal RNA precursors and of some mRNAs. Complements an E.coli disruption mutant, but the E.coli enzyme does not cleave R.capsulatus rRNA precursor, showing substrate recognition is different. Probably also processes some mRNAs, and tRNAs when they are encoded in the rRNA operon. Probably processes pre-crRNA and tracrRNA of type II CRISPR loci if present in the organism. In Rhodobacter capsulatus (Rhodopseudomonas capsulata), this protein is Ribonuclease 3 (rnc).